The sequence spans 372 residues: Small ribosomal subunit protein mS77 (rPPR2) (372 aa).

A mitochondrion-targeting transit peptide spans 1–28; that stretch reads MKSFLLSRQAIHRISLLSSKTPTFCRNF. Residues 240 to 265 are disordered; sequence DNSIRESETVDGEVEEEGFVPSDEVE. The segment covering 248 to 257 has biased composition (acidic residues); it reads TVDGEVEEEG.

As to quaternary structure, component of the mitochondrial ribosome small subunit.

Its subcellular location is the mitochondrion. Functionally, required for karyogamy during female gametophyte development, when the two polar nuclei fuse to form the diploid central cell nucleus. The sequence is that of Small ribosomal subunit protein mS77 (rPPR2) from Arabidopsis thaliana (Mouse-ear cress).